A 92-amino-acid chain; its full sequence is Small ribosomal subunit protein uS19 (92 aa).

Belongs to the universal ribosomal protein uS19 family.

Protein S19 forms a complex with S13 that binds strongly to the 16S ribosomal RNA. The polypeptide is Small ribosomal subunit protein uS19 (Psychromonas ingrahamii (strain DSM 17664 / CCUG 51855 / 37)).